A 372-amino-acid chain; its full sequence is UDP-N-acetylenolpyruvoylglucosamine reductase (372 aa).

An FAD-binding PCMH-type domain is found at 29 to 205 (VGPTARRLIT…LEVEFALDAS (177 aa)). Arg177 is an active-site residue. Ser260 acts as the Proton donor in catalysis. The active site involves Glu364.

Belongs to the MurB family. FAD serves as cofactor.

Its subcellular location is the cytoplasm. The catalysed reaction is UDP-N-acetyl-alpha-D-muramate + NADP(+) = UDP-N-acetyl-3-O-(1-carboxyvinyl)-alpha-D-glucosamine + NADPH + H(+). Its pathway is cell wall biogenesis; peptidoglycan biosynthesis. Its function is as follows. Cell wall formation. In Mycobacterium avium (strain 104), this protein is UDP-N-acetylenolpyruvoylglucosamine reductase.